The sequence spans 237 residues: Ribosomal RNA small subunit methyltransferase G (237 aa).

S-adenosyl-L-methionine is bound by residues Gly78, Phe83, 129–130 (AE), and Arg148.

It belongs to the methyltransferase superfamily. RNA methyltransferase RsmG family.

The protein resides in the cytoplasm. In terms of biological role, specifically methylates the N7 position of a guanine in 16S rRNA. This chain is Ribosomal RNA small subunit methyltransferase G, found in Streptococcus pyogenes serotype M12 (strain MGAS2096).